The following is a 679-amino-acid chain: Methionine--tRNA ligase (679 aa).

Residues 14–24 (PYANGSIHLGH) carry the 'HIGH' region motif. Residues C145, C148, C158, and C161 each coordinate Zn(2+). Positions 331 to 335 (KMSKS) match the 'KMSKS' region motif. K334 is a binding site for ATP. A tRNA-binding domain is found at 577–679 (AFAAVDLRIA…SGAKPGQRVK (103 aa)).

This sequence belongs to the class-I aminoacyl-tRNA synthetase family. MetG type 1 subfamily. In terms of assembly, homodimer. Requires Zn(2+) as cofactor.

It localises to the cytoplasm. It catalyses the reaction tRNA(Met) + L-methionine + ATP = L-methionyl-tRNA(Met) + AMP + diphosphate. Is required not only for elongation of protein synthesis but also for the initiation of all mRNA translation through initiator tRNA(fMet) aminoacylation. This is Methionine--tRNA ligase from Pseudomonas paraeruginosa (strain DSM 24068 / PA7) (Pseudomonas aeruginosa (strain PA7)).